Here is a 342-residue protein sequence, read N- to C-terminus: Phosphate acyltransferase (342 aa).

Belongs to the PlsX family. Homodimer. Probably interacts with PlsY.

The protein resides in the cytoplasm. The enzyme catalyses a fatty acyl-[ACP] + phosphate = an acyl phosphate + holo-[ACP]. It participates in lipid metabolism; phospholipid metabolism. Its function is as follows. Catalyzes the reversible formation of acyl-phosphate (acyl-PO(4)) from acyl-[acyl-carrier-protein] (acyl-ACP). This enzyme utilizes acyl-ACP as fatty acyl donor, but not acyl-CoA. The chain is Phosphate acyltransferase from Shewanella putrefaciens (strain CN-32 / ATCC BAA-453).